Here is a 548-residue protein sequence, read N- to C-terminus: Chaperonin GroEL 2 (548 aa).

ATP-binding positions include Thr-30–Pro-33, Lys-51, Asp-87–Thr-91, Gly-415, Asn-479–Ala-481, and Asp-495. Residues Ala-524–Phe-548 are disordered. Positions Pro-537–Phe-548 are enriched in gly residues.

Belongs to the chaperonin (HSP60) family. Forms a cylinder of 14 subunits composed of two heptameric rings stacked back-to-back. Interacts with the co-chaperonin GroES.

The protein localises to the cytoplasm. The enzyme catalyses ATP + H2O + a folded polypeptide = ADP + phosphate + an unfolded polypeptide.. Functionally, together with its co-chaperonin GroES, plays an essential role in assisting protein folding. The GroEL-GroES system forms a nano-cage that allows encapsulation of the non-native substrate proteins and provides a physical environment optimized to promote and accelerate protein folding. This chain is Chaperonin GroEL 2, found in Burkholderia pseudomallei (strain 668).